Consider the following 116-residue polypeptide: Large ribosomal subunit protein bL19 (116 aa).

The protein belongs to the bacterial ribosomal protein bL19 family.

In terms of biological role, this protein is located at the 30S-50S ribosomal subunit interface and may play a role in the structure and function of the aminoacyl-tRNA binding site. This Mycoplasma mobile (strain ATCC 43663 / 163K / NCTC 11711) (Mesomycoplasma mobile) protein is Large ribosomal subunit protein bL19.